Here is a 543-residue protein sequence, read N- to C-terminus: MAALDLCALPQAEVTFEDVAVFLSQEEWGLLGPAQKGLYREVMLETYRNLVSLGAGLAGPKPEVIAQLEQGDELWVLDMHGAEQPSVDGSAHGTRTENQEVTSGEMLFGRELDPLRGSVLRGPEPGEVHERVREPEGRLDRPGEQRGPRLVTLANEECGLESGGNLRSRSRPVPDQRPHKCDICEQSFEQRSYLNNHKRVHRCKKTNIVHDSGEIFAANLVKEDQKIPVGKRLYYCGCCGKAFRYSANLVKHQRLHSEEKPYKCEECGKAFHQSCELISHRRMHSGEIPYRCDECGKTFNQRPNLMKHQRIHTGEKPYKCSECGKHFSAYSSLIYHQRIHTGEKPYKCSDCGKAFSDGSILIRHRRTHTGEKPYECKECGKGFTQSSNLIQHQRIHTGEKPYKCNECEKAFIQKTKLVEHQRSHTGEKPYECNDCGKVFSQSTHLIQHQRIHTGEKPYKCSECGKAFHNSSRLIHHQRSHHGEKPYKCADCKKAFSQGTYLLQHRRIHTGEKPYTCGECGKAFRHSSNMSQHQRIHLREDFSL.

In terms of domain architecture, KRAB spans 14-87 (VTFEDVAVFL…DMHGAEQPSV (74 aa)). The interval 84 to 151 (QPSVDGSAHG…PGEQRGPRLV (68 aa)) is disordered. Basic and acidic residues predominate over residues 124–147 (EPGEVHERVREPEGRLDRPGEQRG). C2H2-type zinc fingers lie at residues 179-201 (HKCD…KRVH), 234-256 (YYCG…QRLH), 262-284 (YKCE…RRMH), 290-312 (YRCD…QRIH), 318-340 (YKCS…QRIH), 346-368 (YKCS…RRTH), 374-396 (YECK…QRIH), 402-424 (YKCN…QRSH), 430-452 (YECN…QRIH), 458-480 (YKCS…QRSH), 486-508 (YKCA…RRIH), and 514-536 (YTCG…QRIH).

It belongs to the krueppel C2H2-type zinc-finger protein family.

It is found in the nucleus. Its function is as follows. May be involved in transcriptional regulation. The protein is Zinc finger protein 34 (ZNF34) of Bos taurus (Bovine).